Consider the following 215-residue polypeptide: ATP phosphoribosyltransferase (215 aa).

Belongs to the ATP phosphoribosyltransferase family. Short subfamily. Heteromultimer composed of HisG and HisZ subunits.

The protein localises to the cytoplasm. The enzyme catalyses 1-(5-phospho-beta-D-ribosyl)-ATP + diphosphate = 5-phospho-alpha-D-ribose 1-diphosphate + ATP. It functions in the pathway amino-acid biosynthesis; L-histidine biosynthesis; L-histidine from 5-phospho-alpha-D-ribose 1-diphosphate: step 1/9. Catalyzes the condensation of ATP and 5-phosphoribose 1-diphosphate to form N'-(5'-phosphoribosyl)-ATP (PR-ATP). Has a crucial role in the pathway because the rate of histidine biosynthesis seems to be controlled primarily by regulation of HisG enzymatic activity. The chain is ATP phosphoribosyltransferase (hisG) from Clostridium acetobutylicum (strain ATCC 824 / DSM 792 / JCM 1419 / IAM 19013 / LMG 5710 / NBRC 13948 / NRRL B-527 / VKM B-1787 / 2291 / W).